The primary structure comprises 710 residues: MFEKPVVKTFQYGNHTVTLETGVIARQATAAVMVTMDDTAVFVSVVGKKEAVEGQDFFPLTVNYQERTYAAGKIPGGFFKREGRPSEGETLTARLIDRPIRPLFPDAFKNEVQVIATVVSVNPDVQPDIPTMIGTSAALAISGIPFNGPIGAARVGHIDGQLVLNPSNTELEASKLDLVVAGTESAVLMVESEADNLTEEEMLSAVVFGHDQQQAVIKAINEFKAEVATPAWDWVAPAENTALVTKIAELAEAKLVEAYQITEKMARYDRIHEIAGEVNEVLLAEDPEANTKEIHTIFHDLEKTVVRRSIIAGNPRIDGREKDMVRALDVRTGVLPRTHGSSLFTRGETQALVTATLGTQRDAQIIDELTGERKDHFLLHYNFPPYCVGETGFVGSPKRREIGHGKLAKRGIAAVMPSVDEFPYTVRVVSEITESNGSSSMASVCGTSLALMDAGVPIKSSVAGIAMGLVKEGDDFVVLSDILGDEDHLGDMDFKVAGTNTGITALQMDIKIEGITKEIMQIALNQAQGARKHILSVMDEAISGAREDISEFAPRIHTMKISAEKIKDVIGKGGAVIRALTEETGTTIEIEDDGTIKIAATEGAAAKEAIRRIEEITAEVEVGRIYTGKVARLADFGAFVTVLPGKDGLVHISQIAEKRVEKVSDYLTEGQEVQVKVLEIDRQGRVRLSMKEAVEKPAEEANDASEAKGE.

D487 and D493 together coordinate Mg(2+). Residues 554-613 form the KH domain; it reads PRIHTMKISAEKIKDVIGKGGAVIRALTEETGTTIEIEDDGTIKIAATEGAAAKEAIRRI. One can recognise an S1 motif domain in the interval 623–691; the sequence is GRIYTGKVAR…RQGRVRLSMK (69 aa). The tract at residues 691–710 is disordered; sequence KEAVEKPAEEANDASEAKGE.

It belongs to the polyribonucleotide nucleotidyltransferase family. Component of the RNA degradosome, which is a multiprotein complex involved in RNA processing and mRNA degradation. It depends on Mg(2+) as a cofactor.

The protein localises to the cytoplasm. The catalysed reaction is RNA(n+1) + phosphate = RNA(n) + a ribonucleoside 5'-diphosphate. In terms of biological role, involved in mRNA degradation. Catalyzes the phosphorolysis of single-stranded polyribonucleotides processively in the 3'- to 5'-direction. The polypeptide is Polyribonucleotide nucleotidyltransferase (Vibrio campbellii (strain ATCC BAA-1116)).